A 175-amino-acid chain; its full sequence is Apoptosis regulator Bcl-2 homolog (175 aa).

The BH1 signature appears at Gln-75–Ala-94. The BH2 motif lies at Ser-105 to Ala-120.

Belongs to the Bcl-2 family. In terms of assembly, interacts with host BAX; this interaction inhibits BAX oligomerization and subsequent activation. Interacts with host BAK1.

The protein resides in the host mitochondrion. Functionally, plays a role in the inhibition of host apoptosis by sequestering and inactivating multiple proapoptotic BCL-2 proteins, including BAK1 and BAX. The protein is Apoptosis regulator Bcl-2 homolog of Vertebrata (FPV).